A 138-amino-acid chain; its full sequence is Small ribosomal subunit protein uS11c (138 aa).

It belongs to the universal ribosomal protein uS11 family. In terms of assembly, part of the 30S ribosomal subunit.

The protein localises to the plastid. The chain is Small ribosomal subunit protein uS11c from Cuscuta obtusiflora (Peruvian dodder).